The sequence spans 306 residues: Homoserine O-acetyltransferase (306 aa).

The active-site Acyl-thioester intermediate is Cys142. Positions 163 and 192 each coordinate substrate. Residue His235 is the Proton acceptor of the active site. Glu237 is a catalytic residue. Substrate is bound at residue Arg249.

It belongs to the MetA family.

Its subcellular location is the cytoplasm. The catalysed reaction is L-homoserine + acetyl-CoA = O-acetyl-L-homoserine + CoA. It participates in amino-acid biosynthesis; L-methionine biosynthesis via de novo pathway; O-acetyl-L-homoserine from L-homoserine: step 1/1. Transfers an acetyl group from acetyl-CoA to L-homoserine, forming acetyl-L-homoserine. The sequence is that of Homoserine O-acetyltransferase from Clostridium botulinum (strain Eklund 17B / Type B).